The primary structure comprises 337 residues: Transaldolase (337 aa).

The Nuclear localization signal motif lies at 1 to 10 (MSGSPVKRQR). The active-site Schiff-base intermediate with substrate is the Lys-142. The residue at position 219 (Lys-219) is an N6-acetyllysine. A phosphoserine mark is found at Ser-237 and Ser-256. N6-acetyllysine occurs at positions 269, 286, and 321.

Belongs to the transaldolase family. Type 1 subfamily. As to quaternary structure, homodimer. Interacts with KPNA1 and KPNA4.

The protein localises to the nucleus. It is found in the cytoplasm. It catalyses the reaction D-sedoheptulose 7-phosphate + D-glyceraldehyde 3-phosphate = D-erythrose 4-phosphate + beta-D-fructose 6-phosphate. The protein operates within carbohydrate degradation; pentose phosphate pathway; D-glyceraldehyde 3-phosphate and beta-D-fructose 6-phosphate from D-ribose 5-phosphate and D-xylulose 5-phosphate (non-oxidative stage): step 2/3. Functionally, catalyzes the rate-limiting step of the non-oxidative phase in the pentose phosphate pathway. Catalyzes the reversible conversion of sedheptulose-7-phosphate and D-glyceraldehyde 3-phosphate into erythrose-4-phosphate and beta-D-fructose 6-phosphate. In Sus scrofa (Pig), this protein is Transaldolase (TALDO1).